The sequence spans 396 residues: Putative carbamoyltransferase YgeW (396 aa).

Carbamoyl phosphate is bound by residues 71-74 (STRT), Q98, 165-168 (HPTQ), and 330-331 (CL).

The protein belongs to the aspartate/ornithine carbamoyltransferase superfamily. As to quaternary structure, homotrimer.

The chain is Putative carbamoyltransferase YgeW (ygeW) from Escherichia coli O6:H1 (strain CFT073 / ATCC 700928 / UPEC).